We begin with the raw amino-acid sequence, 81 residues long: Weak neurotoxin OH-72 (81 aa).

The signal sequence occupies residues 1–16 (LTLVVVTIVCLDLGYT). Disulfide bonds link Cys19–Cys40, Cys22–Cys27, Cys33–Cys58, Cys62–Cys73, and Cys74–Cys79.

The protein belongs to the three-finger toxin family. Ancestral subfamily. Orphan group II sub-subfamily. In terms of tissue distribution, expressed by the venom gland.

Its subcellular location is the secreted. In terms of biological role, binds with low affinity to muscular (alpha-1-beta-1-delta-epsilon/CHRNA1-CHRNB1-CHRND-CHRNE) and very low affinity to neuronal (alpha-7/CHRNA7) nicotinic acetylcholine receptor (nAChR). This chain is Weak neurotoxin OH-72, found in Ophiophagus hannah (King cobra).